A 249-amino-acid polypeptide reads, in one-letter code: tRNA pseudouridine synthase A (249 aa).

Asp-53 acts as the Nucleophile in catalysis. Tyr-111 serves as a coordination point for substrate.

This sequence belongs to the tRNA pseudouridine synthase TruA family. As to quaternary structure, homodimer.

It catalyses the reaction uridine(38/39/40) in tRNA = pseudouridine(38/39/40) in tRNA. Functionally, formation of pseudouridine at positions 38, 39 and 40 in the anticodon stem and loop of transfer RNAs. This is tRNA pseudouridine synthase A from Streptococcus pneumoniae serotype 2 (strain D39 / NCTC 7466).